A 297-amino-acid polypeptide reads, in one-letter code: Putative 6-phosphogluconate dehydrogenase YqeC (297 aa).

NAD(+) is bound by residues 7–12 and Asn94; that span reads GLGKMG. Substrate-binding positions include Asn94 and 120 to 122; that span reads SGG. The Proton acceptor role is filled by Lys170. Residue 173–174 participates in substrate binding; the sequence is HN. The active-site Proton donor is the Glu177. Tyr178 and Arg268 together coordinate substrate.

The protein belongs to the 6-phosphogluconate dehydrogenase family.

Its function is as follows. May act as NAD-dependent 6-P-gluconate dehydrogenase. The protein is Putative 6-phosphogluconate dehydrogenase YqeC (yqeC) of Bacillus subtilis (strain 168).